Consider the following 267-residue polypeptide: Aspartate/glutamate leucyltransferase (267 aa).

The interval 246–267 (EQEEQTRPLFRPSATGFSTGQE) is disordered.

The protein belongs to the R-transferase family. Bpt subfamily.

The protein resides in the cytoplasm. The enzyme catalyses N-terminal L-glutamyl-[protein] + L-leucyl-tRNA(Leu) = N-terminal L-leucyl-L-glutamyl-[protein] + tRNA(Leu) + H(+). It catalyses the reaction N-terminal L-aspartyl-[protein] + L-leucyl-tRNA(Leu) = N-terminal L-leucyl-L-aspartyl-[protein] + tRNA(Leu) + H(+). Functionally, functions in the N-end rule pathway of protein degradation where it conjugates Leu from its aminoacyl-tRNA to the N-termini of proteins containing an N-terminal aspartate or glutamate. This is Aspartate/glutamate leucyltransferase from Granulibacter bethesdensis (strain ATCC BAA-1260 / CGDNIH1).